A 162-amino-acid polypeptide reads, in one-letter code: 2-C-methyl-D-erythritol 2,4-cyclodiphosphate synthase (162 aa).

A divalent metal cation contacts are provided by Asp10 and His12. Residues 10 to 12 and 36 to 37 contribute to the 4-CDP-2-C-methyl-D-erythritol 2-phosphate site; these read DVH and HS. His44 contributes to the a divalent metal cation binding site. Residues 58–60, 63–67, 102–108, 134–137, Phe141, and Arg144 each bind 4-CDP-2-C-methyl-D-erythritol 2-phosphate; these read DIG, FPDTD, AQAPKMA, and TTTE.

The protein belongs to the IspF family. Homotrimer. The cofactor is a divalent metal cation.

It carries out the reaction 4-CDP-2-C-methyl-D-erythritol 2-phosphate = 2-C-methyl-D-erythritol 2,4-cyclic diphosphate + CMP. It participates in isoprenoid biosynthesis; isopentenyl diphosphate biosynthesis via DXP pathway; isopentenyl diphosphate from 1-deoxy-D-xylulose 5-phosphate: step 4/6. Functionally, involved in the biosynthesis of isopentenyl diphosphate (IPP) and dimethylallyl diphosphate (DMAPP), two major building blocks of isoprenoid compounds. Catalyzes the conversion of 4-diphosphocytidyl-2-C-methyl-D-erythritol 2-phosphate (CDP-ME2P) to 2-C-methyl-D-erythritol 2,4-cyclodiphosphate (ME-CPP) with a corresponding release of cytidine 5-monophosphate (CMP). In Pseudoalteromonas atlantica (strain T6c / ATCC BAA-1087), this protein is 2-C-methyl-D-erythritol 2,4-cyclodiphosphate synthase.